The chain runs to 185 residues: Lysozyme g (185 aa).

Q1 bears the Pyrrolidone carboxylic acid mark. Disulfide bonds link C4-C60 and C18-C29. Residues E73 and D86 contribute to the active site.

The protein belongs to the glycosyl hydrolase 23 family.

Its subcellular location is the secreted. It catalyses the reaction Hydrolysis of (1-&gt;4)-beta-linkages between N-acetylmuramic acid and N-acetyl-D-glucosamine residues in a peptidoglycan and between N-acetyl-D-glucosamine residues in chitodextrins.. The chain is Lysozyme g from Casuarius casuarius (Southern cassowary).